The chain runs to 154 residues: Large ribosomal subunit protein uL23 (154 aa).

It belongs to the universal ribosomal protein uL23 family.

In terms of biological role, this protein binds to a specific region on the 26S rRNA. The polypeptide is Large ribosomal subunit protein uL23 (RPL23A) (Fritillaria agrestis (Stinkbells)).